A 446-amino-acid polypeptide reads, in one-letter code: Palmitoyltransferase PFA4 (446 aa).

Residues 1-8 are Cytoplasmic-facing; it reads MAVQLKWP. A helical transmembrane segment spans residues 9 to 29; the sequence is ILGVIIPCIIIFSLSYGSHYF. The Lumenal portion of the chain corresponds to 30-40; it reads ILRHHLTMKQQ. A helical membrane pass occupies residues 41–61; it reads LIYEFYVTMIWISYLLAIYTN. The Cytoplasmic portion of the chain corresponds to 62 to 161; sequence PGRVPKNYKP…GNNNLPHFMR (100 aa). One can recognise a DHHC domain in the interval 114-164; the sequence is RYCKKCNNYKPPRSHHCKICQQCVLQMDHHCPWTLNCVGNNNLPHFMRFLG. The active-site S-palmitoyl cysteine intermediate is C144. A helical transmembrane segment spans residues 162 to 182; it reads FLGWIIWGTGYLMIQLIKLII. At 183 to 201 the chain is on the lumenal side; the sequence is NYYENSNMPHYLFNKTELV. The chain crosses the membrane as a helical span at residues 202-222; that stretch reads AIIAITPLNFFVFASILVLFI. Over 223–446 the chain is Cytoplasmic; the sequence is RCLINICKGM…TDFGVDEDSD (224 aa).

The protein belongs to the DHHC palmitoyltransferase family. PFA4 subfamily.

The protein localises to the endoplasmic reticulum membrane. It catalyses the reaction L-cysteinyl-[protein] + hexadecanoyl-CoA = S-hexadecanoyl-L-cysteinyl-[protein] + CoA. Mediates the reversible addition of palmitate to target proteins, thereby regulating their membrane association and biological function. This is Palmitoyltransferase PFA4 from Candida albicans (strain SC5314 / ATCC MYA-2876) (Yeast).